The chain runs to 437 residues: MKVIFLRQLKTRGMERKCSRRPGLGPPTLYTFLLGIIFITLSSSRILLVKYSANEENKYDYLPTTVNVCSELMKLILCILVSLCVIKKEDHQSRHLRCTSWKEFSSFMKWSIPAFLYFLDNLIVFYVLSYLQPAMAVIFSNFSIITTALLFRIVLKRHLNWIQWASLLILFLSIVALTASTKTSQHELAGHGFHHDAFFTPSNSCLHFRRDCSLRDNCTSKEWTFSEVQWNTTARVFSHIRLGLGHVLIIVQCFISSMANIYNEKILKEGTQLTESIFIQNSKLYFFGIVFNGLTLVLQSSNRDQIQNCGFFYGHNAFSVVLIFVTAFQGLSVAFILKFLDNMFHVLMAQVTTVIITTVSVLVFDFRPSLDFFLEAPSVLLSIFIYNASKPQNLECAPKQERIRHLSGSLWERSSGDGEELERLTKLKSDDSDDDTL.

Topologically, residues 1–21 are cytoplasmic; it reads MKVIFLRQLKTRGMERKCSRR. Residues 22–42 form a helical membrane-spanning segment; the sequence is PGLGPPTLYTFLLGIIFITLS. Over 43–65 the chain is Lumenal; that stretch reads SSRILLVKYSANEENKYDYLPTT. Residues 66-86 traverse the membrane as a helical segment; that stretch reads VNVCSELMKLILCILVSLCVI. Topologically, residues 87–106 are cytoplasmic; that stretch reads KKEDHQSRHLRCTSWKEFSS. The chain crosses the membrane as a helical span at residues 107-129; the sequence is FMKWSIPAFLYFLDNLIVFYVLS. At 130–132 the chain is on the lumenal side; that stretch reads YLQ. A helical membrane pass occupies residues 133–155; that stretch reads PAMAVIFSNFSIITTALLFRIVL. Topologically, residues 156–158 are cytoplasmic; the sequence is KRH. A helical membrane pass occupies residues 159-179; the sequence is LNWIQWASLLILFLSIVALTA. The Lumenal portion of the chain corresponds to 180–241; it reads STKTSQHELA…TTARVFSHIR (62 aa). N-linked (GlcNAc...) asparagine glycosylation occurs at Asn-217. The chain crosses the membrane as a helical span at residues 242 to 262; it reads LGLGHVLIIVQCFISSMANIY. Residues 263 to 276 are Cytoplasmic-facing; it reads NEKILKEGTQLTES. A helical transmembrane segment spans residues 277-297; the sequence is IFIQNSKLYFFGIVFNGLTLV. The Lumenal portion of the chain corresponds to 298-316; that stretch reads LQSSNRDQIQNCGFFYGHN. The chain crosses the membrane as a helical span at residues 317 to 337; sequence AFSVVLIFVTAFQGLSVAFIL. Residues 338-343 lie on the Cytoplasmic side of the membrane; that stretch reads KFLDNM. The chain crosses the membrane as a helical span at residues 344–364; the sequence is FHVLMAQVTTVIITTVSVLVF. The Lumenal portion of the chain corresponds to 365–367; the sequence is DFR. Residues 368 to 388 traverse the membrane as a helical segment; it reads PSLDFFLEAPSVLLSIFIYNA. At 389–437 the chain is on the cytoplasmic side; that stretch reads SKPQNLECAPKQERIRHLSGSLWERSSGDGEELERLTKLKSDDSDDDTL. Ser-407, Ser-429, and Ser-432 each carry phosphoserine. The segment at 412 to 437 is disordered; that stretch reads ERSSGDGEELERLTKLKSDDSDDDTL. The span at 421-430 shows a compositional bias: basic and acidic residues; the sequence is LERLTKLKSD.

This sequence belongs to the nucleotide-sugar transporter family. SLC35A subfamily. As to quaternary structure, probably forms homooligomers and heterooligomers with SLC35A1, SLC35A2, SLC35A3 and SLC35A4.

It is found in the golgi apparatus membrane. The enzyme catalyses UMP(out) + UDP-alpha-D-glucuronate(in) = UMP(in) + UDP-alpha-D-glucuronate(out). It catalyses the reaction UMP(out) + UDP-N-acetyl-alpha-D-glucosamine(in) = UMP(in) + UDP-N-acetyl-alpha-D-glucosamine(out). It carries out the reaction UDP-N-acetyl-alpha-D-galactosamine(in) + UMP(out) = UDP-N-acetyl-alpha-D-galactosamine(out) + UMP(in). Functionally, probable UDP-sugar:UMP transmembrane antiporter involved in UDP-alpha-D-glucuronate/UDP-GlcA, UDP-GlcNAc/UDP-N-acetyl-alpha-D-glucosamine and UDP-N-acetyl-alpha-D-galactosamine/UDP-GalNAc transport from the cytosol to the lumen of the Golgi. The protein is UDP-sugar transporter protein SLC35A5 of Mus musculus (Mouse).